The primary structure comprises 147 residues: Neocarzinostatin (147 aa).

Positions methionine 1–alanine 34 are cleaved as a signal peptide. 2 disulfides stabilise this stretch: cysteine 71/cysteine 81 and cysteine 122/cysteine 127.

It belongs to the neocarzinostatin family.

NCS has antibiotic activity (for Gram-positive bacteria) and antitumor activity (for certain mouse tumors). NCS binds non-covalently to a chromophore which is the cytotoxic and mutagenic component of the antibiotic. The chromophore binds to DNA as a weak intercalator and causes single- and double-strand breaks. The polypeptide is Neocarzinostatin (ncsA) (Streptomyces carzinostaticus).